The chain runs to 174 residues: Endoribonuclease YbeY (174 aa).

The Zn(2+) site is built by H129, H133, and H139.

The protein belongs to the endoribonuclease YbeY family. Zn(2+) is required as a cofactor.

The protein resides in the cytoplasm. Functionally, single strand-specific metallo-endoribonuclease involved in late-stage 70S ribosome quality control and in maturation of the 3' terminus of the 16S rRNA. This is Endoribonuclease YbeY from Lactobacillus delbrueckii subsp. bulgaricus (strain ATCC BAA-365 / Lb-18).